The primary structure comprises 535 residues: Ribonuclease Y (535 aa).

Residues 4–24 (IILAMVCALIGLIIGYVAISM) traverse the membrane as a helical segment. Residues 107-145 (TDRASSLDRKDENLSNKEKMLDSKEQSLTDKSRHINERE) form a disordered region. The KH domain maps to 225 to 285 (TITTVHLPDD…IRREIARMTL (61 aa)). Residues 351 to 444 (VLRHSVEVGK…VAAADALSSA (94 aa)) enclose the HD domain.

The protein belongs to the RNase Y family.

It is found in the cell membrane. Functionally, endoribonuclease that initiates mRNA decay. The sequence is that of Ribonuclease Y from Streptococcus agalactiae serotype Ia (strain ATCC 27591 / A909 / CDC SS700).